The primary structure comprises 171 residues: 3-hydroxydecanoyl-[acyl-carrier-protein] dehydratase (171 aa).

Histidine 70 is an active-site residue.

This sequence belongs to the thioester dehydratase family. FabA subfamily. Homodimer.

It is found in the cytoplasm. It carries out the reaction a (3R)-hydroxyacyl-[ACP] = a (2E)-enoyl-[ACP] + H2O. It catalyses the reaction (3R)-hydroxydecanoyl-[ACP] = (2E)-decenoyl-[ACP] + H2O. The catalysed reaction is (2E)-decenoyl-[ACP] = (3Z)-decenoyl-[ACP]. It functions in the pathway lipid metabolism; fatty acid biosynthesis. Its function is as follows. Necessary for the introduction of cis unsaturation into fatty acids. Catalyzes the dehydration of (3R)-3-hydroxydecanoyl-ACP to E-(2)-decenoyl-ACP and then its isomerization to Z-(3)-decenoyl-ACP. Can catalyze the dehydratase reaction for beta-hydroxyacyl-ACPs with saturated chain lengths up to 16:0, being most active on intermediate chain length. The chain is 3-hydroxydecanoyl-[acyl-carrier-protein] dehydratase from Pseudomonas putida (strain GB-1).